A 219-amino-acid polypeptide reads, in one-letter code: Protein-L-isoaspartate O-methyltransferase 1 (219 aa).

Residue S67 is part of the active site.

It belongs to the methyltransferase superfamily. L-isoaspartyl/D-aspartyl protein methyltransferase family.

Its subcellular location is the cytoplasm. The catalysed reaction is [protein]-L-isoaspartate + S-adenosyl-L-methionine = [protein]-L-isoaspartate alpha-methyl ester + S-adenosyl-L-homocysteine. Functionally, catalyzes the methyl esterification of L-isoaspartyl residues in peptides and proteins that result from spontaneous decomposition of normal L-aspartyl and L-asparaginyl residues. It plays a role in the repair and/or degradation of damaged proteins. The chain is Protein-L-isoaspartate O-methyltransferase 1 from Geotalea uraniireducens (strain Rf4) (Geobacter uraniireducens).